Reading from the N-terminus, the 631-residue chain is MPEISLRHVVSCSSQDSTHCAENLLKADTYRKWRAAKAGEKTISVVLQLEKEEQIHSVDIGNDGSAFVEVLVGSSAGGATAGEQDYEVLLVTSSFMSPSESRSGSNPNRVRIFGPDKLVRAAAEKRWDRVKIVCSQPYSKDSPYGLSFVKFHSPPDKDEAEATSQKVTVTKLGQFRVKEEDDSANSLKPGALFFSRINKTSSASTSDPAGPSYAAATLQASSAASSASPVPKVVGSSSKPQEPPKGKRKLDLSLEDRKPPSKPSAGPSTLKRPKLSVPSRTPAAAPASTPAQRAVPGKPRGEGTEPRGARTGPQELGKILQGVVVVLSGFQNPFRSELRDKALELGAKYRPDWTPDSTHLICAFANTPKYSQVLGLGGRIVRKEWVLDCHHMRRRLPSRRYLMAGLGSSSEDEGDSHSESGEDEAPKLPQKRPQPKAKTQAAGPSSPPRPPTPKETKAPSPGPQDNSDTEGEESEGRDNGAEDSGDTEDELRRVAKQREQRQPPAPEENGEDPYAGSTDENTDSETPSEADLPIPELPDFFEGKHFFLYGEFPGDERRRLIRYVTAFNGELEDYMNERVQFVITAQEWDPNFEEALMENPSLAFVRPRWIYSCNEKQKLLPHQLYGVVPQA.

Serine 142 is modified (phosphoserine). Lysine 178 participates in a covalent cross-link: Glycyl lysine isopeptide (Lys-Gly) (interchain with G-Cter in SUMO1); alternate. Lysine 178 is covalently cross-linked (Glycyl lysine isopeptide (Lys-Gly) (interchain with G-Cter in SUMO2); alternate). Threonine 200 carries the phosphothreonine modification. Residues serine 201, serine 206, and serine 228 each carry the phosphoserine modification. Low complexity predominate over residues 225–238 (SSASPVPKVVGSSS). The interval 225-315 (SSASPVPKVV…PRGARTGPQE (91 aa)) is disordered. Basic and acidic residues predominate over residues 242-259 (EPPKGKRKLDLSLEDRKP). Residue serine 261 is modified to Phosphoserine. Low complexity predominate over residues 278-294 (PSRTPAAAPASTPAQRA). Threonine 281 carries the post-translational modification Phosphothreonine. The span at 299 to 308 (PRGEGTEPRG) shows a compositional bias: basic and acidic residues. Residues 315–403 (ELGKILQGVV…RRLPSRRYLM (89 aa)) form the BRCT 1 domain. Phosphoserine is present on residues serine 371, serine 408, serine 409, and serine 410. A disordered region spans residues 405 to 537 (GLGSSSEDEG…SEADLPIPEL (133 aa)). A compositionally biased stretch (basic and acidic residues) spans 415 to 426 (DSHSESGEDEAP). Residues serine 445 and serine 446 each carry the phosphoserine modification. Phosphothreonine is present on residues threonine 452 and threonine 456. 2 positions are modified to phosphoserine: serine 460 and serine 484. A Phosphothreonine modification is found at threonine 487. The segment covering 490-501 (ELRRVAKQREQR) has biased composition (basic and acidic residues). At serine 517 the chain carries Phosphoserine. Threonine 518 and threonine 522 each carry phosphothreonine. Positions 536 to 627 (ELPDFFEGKH…KLLPHQLYGV (92 aa)) constitute a BRCT 2 domain.

In terms of assembly, homodimer. Interacts with polynucleotide kinase (PNK), DNA polymerase-beta (POLB) and DNA ligase III (LIG3). Interacts with APTX and APLF. Interacts with APEX1; the interaction is induced by SIRT1 and increases with the acetylated form of APEX1. Interacts with (poly-ADP-ribosylated) PARP1. Phosphorylation of Ser-371 causes dimer dissociation. Phosphorylation by CK2 promotes interaction with APTX and APLF. In terms of processing, sumoylated.

The protein localises to the nucleus. Its subcellular location is the chromosome. Scaffold protein involved in DNA single-strand break repair by mediating the assembly of DNA break repair protein complexes. Negatively regulates ADP-ribosyltransferase activity of PARP1 during base-excision repair in order to prevent excessive PARP1 activity. Recognizes and binds poly-ADP-ribose chains: specifically binds auto-poly-ADP-ribosylated PARP1, limiting its activity. This chain is DNA repair protein XRCC1 (Xrcc1), found in Mus musculus (Mouse).